We begin with the raw amino-acid sequence, 397 residues long: Lysophospholipid transporter LplT (397 aa).

The Periplasmic segment spans residues 1–17; it reads MSESVHTNTSLWSKGMK. Residues 18 to 38 form a helical membrane-spanning segment; the sequence is AVIVAQFLSAFGDNALLFATL. Topologically, residues 39-52 are cytoplasmic; the sequence is ALLKAQFYPEWSQP. A helical transmembrane segment spans residues 53-73; it reads ILQMVFVGAYILFAPFVGQVA. The Periplasmic portion of the chain corresponds to 74 to 90; sequence DSFAKGRVMMFANGLKL. A helical membrane pass occupies residues 91–111; that stretch reads LGAASICFGINPFLGYTLVGV. Residues 112–144 lie on the Cytoplasmic side of the membrane; it reads GAAAYSPAKYGILGELTTGSKLVKANGLMEAST. Residues 145 to 165 form a helical membrane-spanning segment; it reads IAAILLGSVAGGVLADWHVLV. Residue Ala-166 is a topological domain, periplasmic. A helical membrane pass occupies residues 167–187; sequence LAACALAYGGAVVANIYIPKL. Over 188–226 the chain is Cytoplasmic; sequence AAARPGQSWNLINMTRSFLNACTSLWRNGETRFSLVGTS. Residues 227-247 traverse the membrane as a helical segment; the sequence is LFWGAGVTLRFLLVLWVPVAL. Residues 248–256 are Periplasmic-facing; that stretch reads GITDNATPT. A helical transmembrane segment spans residues 257–277; the sequence is YLNAMVAIGIVVGAGAAAKLV. Residues 278 to 280 lie on the Cytoplasmic side of the membrane; sequence TLE. Residues 281-301 form a helical membrane-spanning segment; that stretch reads TVSRCMPAGILIGVVVLIFSL. At 302–304 the chain is on the periplasmic side; that stretch reads QHE. Residues 305 to 325 form a helical membrane-spanning segment; the sequence is QLPAYALLMLIGVLGGFFVVP. Residues 326–343 lie on the Cytoplasmic side of the membrane; that stretch reads LNALLQERGKKSVGAGNA. A helical membrane pass occupies residues 344–364; the sequence is IAVQNLGENSAMLLMLGIYSL. The Periplasmic portion of the chain corresponds to 365 to 366; sequence AV. Residues 367 to 387 form a helical membrane-spanning segment; it reads MVGIPVVPIGIGFGALFALAI. Residues 388 to 397 lie on the Cytoplasmic side of the membrane; that stretch reads TALWIWQRRH.

This sequence belongs to the major facilitator superfamily. LplT (TC 2.A.1.42) family.

It is found in the cell inner membrane. Its function is as follows. Catalyzes the facilitated diffusion of 2-acyl-glycero-3-phosphoethanolamine (2-acyl-GPE) into the cell. In Escherichia coli O157:H7 (strain EC4115 / EHEC), this protein is Lysophospholipid transporter LplT.